Consider the following 309-residue polypeptide: Taste receptor type 2 member 105 (309 aa).

The Extracellular portion of the chain corresponds to 1–9; sequence MLSAAEGIL. A helical transmembrane segment spans residues 10–32; sequence LSIATVEAGLGVLGNTFIALVNC. Topologically, residues 33 to 44 are cytoplasmic; that stretch reads MDWAKNKKLSKI. The helical transmembrane segment at 45–67 threads the bilayer; the sequence is GFLLFGLATSRIFIVWILILDAY. The Extracellular portion of the chain corresponds to 68-86; it reads AKLFFPGKYLSKSLTEIIS. Residues 87 to 109 form a helical membrane-spanning segment; it reads CIWMTVNHMTVWFATSLSIFYFL. At 110–129 the chain is on the cytoplasmic side; it reads KIANFSHYIFLWLKRRTDKV. The helical transmembrane segment at 130–149 threads the bilayer; the sequence is FAFLLWCLLISWAISFSFTV. Residues 150–177 lie on the Extracellular side of the membrane; that stretch reads KVMKSNPKNHGNRTSGTHWEKREFTSNY. N161 is a glycosylation site (N-linked (GlcNAc...) asparagine). A helical membrane pass occupies residues 178 to 200; the sequence is VLINIGVISLLIMTLTACFLLII. Over 201 to 226 the chain is Cytoplasmic; the sequence is SLWKHSRQMQSNVSGFRDLNTEAHVK. A helical transmembrane segment spans residues 227-249; that stretch reads AIKFLISFIILFILYFIGVAVEI. The Extracellular segment spans residues 250–258; it reads ICMFIPENK. The helical transmembrane segment at 259–281 threads the bilayer; the sequence is LLFIFGLTTASVYPCCHSVILIL. The Cytoplasmic segment spans residues 282 to 309; sequence TNSQLKQAFVKVLEGLKFSENGKDLRAT.

The protein belongs to the G-protein coupled receptor T2R family. As to expression, expressed in subsets of taste receptor cells of the tongue and palate epithelium and exclusively in gustducin-positive cells. Expressed in 15% taste bud cells in circumvallate and foliate papillae but only in 2% in fungiform papillae. Expressed in the duodenum, antrum and fundus (part of the stomach).

It is found in the membrane. Functionally, gustducin-coupled cycloheximide receptor implicated in the perception of bitter compounds in the oral cavity and the gastrointestinal tract. Signals through PLCB2 and the calcium-regulated cation channel TRPM5. This Rattus norvegicus (Rat) protein is Taste receptor type 2 member 105 (Tas2r105).